A 397-amino-acid chain; its full sequence is MEQTWRWYGPNDPVSLDDIRQAGATGVVTALHHIPNGVVWPVSEIKQRQAELAAKNLVWSVVESVPIHEDIKTHSGNYQQYIENYQQTLRNIAECGIDTVCYNFMPILDWTRTDLEYELPDGSKALRFDQIAFAAFELHILKRPGASNDYTAEEQVQAEAYFNAMTEADIAKLTGNIIAGLPGAEEGYTLDQFRARLAEYDGIDKAQLRENMAYFLRAIIPVAEQVGLRMAVHPDDPPRPILGLPRIVSTIEDMQWLKETVDSIHNGFTMCTGSYGVRADNDLVKMIETFGDRIHFTHLRSTCREGNPKTFHEGGHLQGDVDMYSVVKAILTEEQRRQSLGDMRPIPMRPDHGHQMLDDLHKKTNPGYSAIGRLKGLAEVRGVELALKRTFFPELKQ.

The protein belongs to the mannonate dehydratase family. Requires Fe(2+) as cofactor. It depends on Mn(2+) as a cofactor.

The catalysed reaction is D-mannonate = 2-dehydro-3-deoxy-D-gluconate + H2O. It participates in carbohydrate metabolism; pentose and glucuronate interconversion. Catalyzes the dehydration of D-mannonate. This chain is Mannonate dehydratase, found in Yersinia pestis bv. Antiqua (strain Angola).